We begin with the raw amino-acid sequence, 150 residues long: MQVILLDKVANLGSLGDQVNVKAGYARNFLVPQGKAVPATKKNVEFFEARRAELEAKLADVLAAAEARAAKIKELGSVTIASKAGDEGKLFGSIGTRDIADAVTAAGVDIAKSEVRLPNGVLRTLGEHEVSFQVHSDVFAELNVVVVAEA.

This sequence belongs to the bacterial ribosomal protein bL9 family.

Its function is as follows. Binds to the 23S rRNA. The sequence is that of Large ribosomal subunit protein bL9 from Pectobacterium carotovorum subsp. carotovorum (strain PC1).